Reading from the N-terminus, the 469-residue chain is MSEDLSMKCGLEIHVQVDTNSKLFCQCPTNYKDVEPNTNICPVCIGHPGAKPMPPNKKAIDMAIMVAKMLGCEMVIDKDIYFQRKHYNYPDLPSGYQKTSVPIGEHGTFLGVGITEVHLEEDPGQYKPDLGTVDYNRSGTPLIEIVTDPDMKSPEEAREFLRQLLRLFRYIGNLRGEGTMRADTNISIKYNGIQGNRVEVKNVNSIRGVYKVLKYELIRQKNVLRRGGEIKLETRAFMESQMITKGMRSKETADDYRYIPDPDLQPIVLSNDWVEKVEAQMPETPMNKEKRFVEQYGIKEDDAKVLVSDLELADVFEKVVAELGNDKDGISLAVTWIRNELKRVLVYNKIEFFETNLKPEHMVELINSIKDKTISQKIGKTIIEQMVEHKGEKTPKELISEMGLTVIEDTSELEKACEEAIKNSEKAIEDYKSGNQRALNSVVGQVMKLTRGRAEPGTVVEILKKKIDG.

Belongs to the GatB/GatE family. GatB subfamily. As to quaternary structure, heterotrimer of A, B and C subunits.

The enzyme catalyses L-glutamyl-tRNA(Gln) + L-glutamine + ATP + H2O = L-glutaminyl-tRNA(Gln) + L-glutamate + ADP + phosphate + H(+). It catalyses the reaction L-aspartyl-tRNA(Asn) + L-glutamine + ATP + H2O = L-asparaginyl-tRNA(Asn) + L-glutamate + ADP + phosphate + 2 H(+). In terms of biological role, allows the formation of correctly charged Asn-tRNA(Asn) or Gln-tRNA(Gln) through the transamidation of misacylated Asp-tRNA(Asn) or Glu-tRNA(Gln) in organisms which lack either or both of asparaginyl-tRNA or glutaminyl-tRNA synthetases. The reaction takes place in the presence of glutamine and ATP through an activated phospho-Asp-tRNA(Asn) or phospho-Glu-tRNA(Gln). The sequence is that of Aspartyl/glutamyl-tRNA(Asn/Gln) amidotransferase subunit B from Methanococcus maripaludis (strain C7 / ATCC BAA-1331).